Reading from the N-terminus, the 257-residue chain is Phycoerythrobilin:ferredoxin oxidoreductase (257 aa).

Belongs to the HY2 family.

It catalyses the reaction (3Z)-phycoerythrobilin + oxidized 2[4Fe-4S]-[ferredoxin] = 15,16-dihydrobiliverdin + reduced 2[4Fe-4S]-[ferredoxin] + 2 H(+). Catalyzes the two-electron reduction of the C2 and C3(1) diene system of 15,16-dihydrobiliverdin. The chain is Phycoerythrobilin:ferredoxin oxidoreductase from Prochlorococcus marinus (strain MIT 9303).